Reading from the N-terminus, the 73-residue chain is Putative antimicrobial peptide clone 5 (73 aa).

The N-terminal stretch at 1 to 22 (MQIKHLITLFFLVLIGADQCSA) is a signal peptide. A propeptide spanning residues 45–73 (EVSPQIDQYRNFQKREAELEELLDRLPMY) is cleaved from the precursor.

Belongs to the non-disulfide-bridged peptide (NDBP) superfamily. Short antimicrobial peptide (group 4) family. Expressed by the venom gland.

Its subcellular location is the secreted. In terms of biological role, antibacterial peptide. This Tityus costatus (Brazilian scorpion) protein is Putative antimicrobial peptide clone 5.